Reading from the N-terminus, the 434-residue chain is Urokinase-type plasminogen activator (434 aa).

Positions 1–20 (MKLIIFLTVTLCTLVTGLDS) are cleaved as a signal peptide. In terms of domain architecture, EGF-like spans 36 to 72 (QHRECQCLNGGTCITYRFFSQIKRCLCPEGYGGLHCE). 12 disulfide bridges follow: cysteine 40–cysteine 48, cysteine 42–cysteine 60, cysteine 62–cysteine 71, cysteine 79–cysteine 158, cysteine 96–cysteine 139, cysteine 128–cysteine 152, cysteine 162–cysteine 296, cysteine 202–cysteine 218, cysteine 210–cysteine 285, cysteine 310–cysteine 379, cysteine 342–cysteine 358, and cysteine 369–cysteine 397. Positions 79 to 158 (CYSGNGEDYR…ETPCSTIEKC (80 aa)) constitute a Kringle domain. The connecting peptide stretch occupies residues 159–172 (ERTCGQRSFSKYFK). The Peptidase S1 domain maps to 173–421 (IVGGSQAEVE…YLNWIDSNMN (249 aa)). Histidine 217 functions as the Charge relay system in the catalytic mechanism. Asparagine 228 carries N-linked (GlcNAc...) asparagine glycosylation. Aspartate 272 serves as the catalytic Charge relay system. The active-site Charge relay system is serine 373.

This sequence belongs to the peptidase S1 family.

Its subcellular location is the secreted. It catalyses the reaction Specific cleavage of Arg-|-Val bond in plasminogen to form plasmin.. Specifically cleaves the zymogen plasminogen to form the active enzyme plasmin. This Gallus gallus (Chicken) protein is Urokinase-type plasminogen activator (PLAU).